A 482-amino-acid polypeptide reads, in one-letter code: Adenylyltransferase and sulfurtransferase uba4 (482 aa).

Residues Glu33–Ser57 form a disordered region. Over residues Ala39 to Arg54 the composition is skewed to polar residues. Residues Gly98, Asp119, Ser126–Arg130, Lys143, and Asp187–Asn188 contribute to the ATP site. Positions 236 and 239 each coordinate Zn(2+). Cys253 (glycyl thioester intermediate; for adenylyltransferase activity) is an active-site residue. Zn(2+) is bound by residues Cys315 and Cys318. In terms of domain architecture, Rhodanese spans Ala366–Pro480. The Cysteine persulfide intermediate; for sulfurtransferase activity role is filled by Cys435.

This sequence in the N-terminal section; belongs to the HesA/MoeB/ThiF family. UBA4 subfamily. It depends on Zn(2+) as a cofactor.

Its subcellular location is the cytoplasm. The protein resides in the cytosol. It carries out the reaction [molybdopterin-synthase sulfur-carrier protein]-C-terminal Gly-Gly + ATP + H(+) = [molybdopterin-synthase sulfur-carrier protein]-C-terminal Gly-Gly-AMP + diphosphate. It catalyses the reaction [molybdopterin-synthase sulfur-carrier protein]-C-terminal Gly-Gly-AMP + S-sulfanyl-L-cysteinyl-[cysteine desulfurase] + AH2 = [molybdopterin-synthase sulfur-carrier protein]-C-terminal-Gly-aminoethanethioate + L-cysteinyl-[cysteine desulfurase] + A + AMP + 2 H(+). Its pathway is tRNA modification; 5-methoxycarbonylmethyl-2-thiouridine-tRNA biosynthesis. The protein operates within cofactor biosynthesis; molybdopterin biosynthesis. Its function is as follows. Plays a central role in 2-thiolation of mcm(5)S(2)U at tRNA wobble positions of cytosolic tRNA(Lys), tRNA(Glu) and tRNA(Gln). Also essential during biosynthesis of the molybdenum cofactor. Acts by mediating the C-terminal thiocarboxylation of sulfur carriers urm1 and mocs2a. Its N-terminus first activates urm1 and mocs2a as acyl-adenylates (-COAMP), then the persulfide sulfur on the catalytic cysteine is transferred to urm1 and mocs2a to form thiocarboxylation (-COSH) of their C-terminus. The reaction probably involves hydrogen sulfide that is generated from the persulfide intermediate and that acts as a nucleophile towards urm1 and mocs2a. Subsequently, a transient disulfide bond is formed. Does not use thiosulfate as sulfur donor; nfs1 probably acting as a sulfur donor for thiocarboxylation reactions. In Emericella nidulans (strain FGSC A4 / ATCC 38163 / CBS 112.46 / NRRL 194 / M139) (Aspergillus nidulans), this protein is Adenylyltransferase and sulfurtransferase uba4.